Reading from the N-terminus, the 106-residue chain is Protein aveugle (106 aa).

An SAM domain is found at 26–91 (WTVSDVLKWY…WREIVKQRLK (66 aa)).

Interacts with the SAM domain of cnk.

Its subcellular location is the cytoplasm. The protein localises to the membrane. In terms of biological role, required for normal photoreceptor differentiation between Ras and Raf for EGFR signaling in the eye and for mitogen-activated protein kinase phosphorylation. Probably acts together with Cnk to promote Raf activation, perhaps by recruiting an activating kinase. The sequence is that of Protein aveugle (ave) from Drosophila melanogaster (Fruit fly).